The sequence spans 194 residues: uncharacterized protein (194 aa).

This is an uncharacterized protein from Aquifex aeolicus (strain VF5).